A 262-amino-acid polypeptide reads, in one-letter code: Acyl-[acyl-carrier-protein]--UDP-N-acetylglucosamine O-acyltransferase (262 aa).

This sequence belongs to the transferase hexapeptide repeat family. LpxA subfamily. As to quaternary structure, homotrimer.

The protein resides in the cytoplasm. The enzyme catalyses a (3R)-hydroxyacyl-[ACP] + UDP-N-acetyl-alpha-D-glucosamine = a UDP-3-O-[(3R)-3-hydroxyacyl]-N-acetyl-alpha-D-glucosamine + holo-[ACP]. The protein operates within glycolipid biosynthesis; lipid IV(A) biosynthesis; lipid IV(A) from (3R)-3-hydroxytetradecanoyl-[acyl-carrier-protein] and UDP-N-acetyl-alpha-D-glucosamine: step 1/6. Functionally, involved in the biosynthesis of lipid A, a phosphorylated glycolipid that anchors the lipopolysaccharide to the outer membrane of the cell. This chain is Acyl-[acyl-carrier-protein]--UDP-N-acetylglucosamine O-acyltransferase, found in Cronobacter sakazakii (strain ATCC BAA-894) (Enterobacter sakazakii).